The chain runs to 520 residues: Bifunctional dihydrofolate reductase-thymidylate synthase (520 aa).

In terms of domain architecture, DHFR spans 26–229 (AFSIVVALDM…LEFEICKYVP (204 aa)). A substrate-binding site is contributed by V30. NADP(+) contacts are provided by residues A32 and 38 to 44 (GIGDGES). D52 contacts substrate. Residues 81 to 83 (RKT), 102 to 105 (LSSK), and 157 to 164 (GGAQVYAD) contribute to the NADP(+) site. Residues Y162 and T180 each contribute to the substrate site. Positions 234–520 (ERQYLELIDR…HPAIKMEMAV (287 aa)) are thymidylate synthase. A dUMP-binding site is contributed by R254. C400 is an active-site residue. DUMP contacts are provided by residues H401, 421–425 (QRSCD), N433, and 463–465 (HVY).

In the N-terminal section; belongs to the dihydrofolate reductase family. The protein in the C-terminal section; belongs to the thymidylate synthase family.

It carries out the reaction (6S)-5,6,7,8-tetrahydrofolate + NADP(+) = 7,8-dihydrofolate + NADPH + H(+). The catalysed reaction is dUMP + (6R)-5,10-methylene-5,6,7,8-tetrahydrofolate = 7,8-dihydrofolate + dTMP. The protein operates within cofactor biosynthesis; tetrahydrofolate biosynthesis; 5,6,7,8-tetrahydrofolate from 7,8-dihydrofolate: step 1/1. Bifunctional enzyme. Involved in de novo dTMP biosynthesis. Key enzyme in folate metabolism. Catalyzes an essential reaction for de novo glycine and purine synthesis, DNA precursor synthesis, and for the conversion of dUMP to dTMP. This Leishmania major protein is Bifunctional dihydrofolate reductase-thymidylate synthase.